The chain runs to 236 residues: Phosphoribosylaminoimidazole-succinocarboxamide synthase (236 aa).

The protein belongs to the SAICAR synthetase family.

The catalysed reaction is 5-amino-1-(5-phospho-D-ribosyl)imidazole-4-carboxylate + L-aspartate + ATP = (2S)-2-[5-amino-1-(5-phospho-beta-D-ribosyl)imidazole-4-carboxamido]succinate + ADP + phosphate + 2 H(+). The protein operates within purine metabolism; IMP biosynthesis via de novo pathway; 5-amino-1-(5-phospho-D-ribosyl)imidazole-4-carboxamide from 5-amino-1-(5-phospho-D-ribosyl)imidazole-4-carboxylate: step 1/2. The polypeptide is Phosphoribosylaminoimidazole-succinocarboxamide synthase (Pelodictyon phaeoclathratiforme (strain DSM 5477 / BU-1)).